A 247-amino-acid polypeptide reads, in one-letter code: tRNA1(Val) (adenine(37)-N6)-methyltransferase (247 aa).

The protein belongs to the methyltransferase superfamily. tRNA (adenine-N(6)-)-methyltransferase family.

It localises to the cytoplasm. It carries out the reaction adenosine(37) in tRNA1(Val) + S-adenosyl-L-methionine = N(6)-methyladenosine(37) in tRNA1(Val) + S-adenosyl-L-homocysteine + H(+). Specifically methylates the adenine in position 37 of tRNA(1)(Val) (anticodon cmo5UAC). The protein is tRNA1(Val) (adenine(37)-N6)-methyltransferase of Edwardsiella ictaluri (strain 93-146).